A 67-amino-acid chain; its full sequence is Large ribosomal subunit protein bL31 (67 aa).

C16, C18, C36, and C39 together coordinate Zn(2+).

It belongs to the bacterial ribosomal protein bL31 family. Type A subfamily. In terms of assembly, part of the 50S ribosomal subunit. Zn(2+) serves as cofactor.

Binds the 23S rRNA. This chain is Large ribosomal subunit protein bL31, found in Aliarcobacter butzleri (strain RM4018) (Arcobacter butzleri).